We begin with the raw amino-acid sequence, 155 residues long: Ribonuclease 2B (155 aa).

A signal peptide spans 1–25 (MGLKLLESRLCLLLLLGLVLTLVSC). His38 functions as the Proton acceptor in the catalytic mechanism. Intrachain disulfides connect Cys47–Cys106, Cys61–Cys118, Cys79–Cys133, and Cys86–Cys94. 62-66 (KDLNT) is a substrate binding site. Residue Asn114 is glycosylated (N-linked (GlcNAc...) asparagine). The active-site Proton donor is His150.

The protein belongs to the pancreatic ribonuclease family.

It carries out the reaction an [RNA] containing cytidine + H2O = an [RNA]-3'-cytidine-3'-phosphate + a 5'-hydroxy-ribonucleotide-3'-[RNA].. It catalyses the reaction an [RNA] containing uridine + H2O = an [RNA]-3'-uridine-3'-phosphate + a 5'-hydroxy-ribonucleotide-3'-[RNA].. This is a non-secretory ribonuclease. It is a pyrimidine specific nuclease with a slight preference for U. Cytotoxin and helminthotoxin. Possesses a wide variety of biological activities. The chain is Ribonuclease 2B from Mus musculus (Mouse).